Consider the following 1476-residue polypeptide: ABC-type transporter frbG (1476 aa).

Helical transmembrane passes span 26–46 (LLFEEAVLAAVPLGLCVVLAL), 64–84 (LYYAKLTALFLLASVQLVQLI), 97–117 (SIAIAAVSFASTIVFIGLCHL), 122–142 (SAKPSDLLTLYFVTCIAFDII), and 146–166 (TLWIVSGGTAVASTFTVGLVL). N244 carries an N-linked (GlcNAc...) asparagine glycan. A run of 4 helical transmembrane segments spans residues 266–286 (FLAGVLPRLALTGFTFAQPFL), 302–322 (AGATGTWLIVAYAGVYIGIAI), 380–400 (LQTMHQAWASFVDICLATWLL), and 409–429 (IPSVGFSLLCVVFGGGVAVMA). The 280-residue stretch at 274–553 (LALTGFTFAQ…FVHSAVNLML (280 aa)) folds into the ABC transmembrane type-1 1 domain. The N-linked (GlcNAc...) asparagine glycan is linked to N464. 2 helical membrane passes run 487–507 (CLVFMVSLTYLSNVFAPIIGF) and 533–553 (IFALLTEGVGSFVHSAVNLML). Residues 619-845 (IQARDTNIGW…VTAHVHNQTS (227 aa)) form the ABC transporter 1 domain. 652-659 (GPTNSGKS) contacts ATP. N-linked (GlcNAc...) asparagine glycans are attached at residues N694, N776, N805, and N842. 5 helical membrane-spanning segments follow: residues 898–918 (AVFLALCMALVFAMVFPSIWV), 936–956 (YLLVYFFLGVAALIALIGGGS), 1017–1037 (LFAFITCIAQAIVVCVSSPFV), 1121–1141 (LGLVLDLVVAGIAILLAIVIV), and 1151–1171 (GFLGIALTSLVSFGLNLGGFI). An ABC transmembrane type-1 2 domain is found at 898–1179 (AVFLALCMAL…FIGGWTGLET (282 aa)). Residues 1216-1447 (IVFDDVTASY…LSSSSPTSSP (232 aa)) form the ABC transporter 2 domain. N1235 carries N-linked (GlcNAc...) asparagine glycosylation. 1250 to 1257 (GRTGSGKS) contacts ATP.

The protein belongs to the ABC transporter superfamily. ABCC family. Conjugate transporter (TC 3.A.1.208) subfamily.

The protein localises to the cell membrane. Its function is as follows. ABC-type transporter; part of the gene cluster that mediates the biosynthesis of the antifungal antibiotic FR901469, an inhibitor of beta-1,3-glucansynthase, exerting antifungal activity against the pathogenes Candida albicans and Aspergillus fumigatus. FR901469 is a cyclic depsipeptide containing 12 amino acid residues and a fatty acid chain. Probably involved in the secretion of FR901469. The polypeptide is ABC-type transporter frbG (Dothideomycetidae sp. (strain 11243) (Fungal sp. (strain No.11243))).